Here is a 1052-residue protein sequence, read N- to C-terminus: Membrane-bound transcription factor site-1 protease (1052 aa).

The signal sequence occupies residues 1–17; it reads MKLINIWLLLLVVLLCG. The propeptide occupies 18–186; it reads KKHLGDRLGK…TGRHSSRRLL (169 aa). N-linked (GlcNAc...) asparagine glycosylation is present at Asn148. The residue at position 168 (Ser168) is a Phosphoserine. The Lumenal segment spans residues 187-999; the sequence is RAIPRQVAQT…MPGRYNQEVG (813 aa). The region spanning 190 to 472 is the Peptidase S8 domain; sequence PRQVAQTLQA…HGKLDLLRAY (283 aa). Asp218 acts as the Charge relay system in catalysis. N-linked (GlcNAc...) asparagine glycosylation occurs at Asn236. His249 functions as the Charge relay system in the catalytic mechanism. N-linked (GlcNAc...) asparagine glycosylation is present at Asn305. Ser414 (charge relay system) is an active-site residue. N-linked (GlcNAc...) asparagine glycosylation is found at Asn515 and Asn728. Positions 877-887 are enriched in polar residues; the sequence is PSLSHSGNRQR. The disordered stretch occupies residues 877–900; it reads PSLSHSGNRQRPPSGAGLAPPERM. Residue Asn939 is glycosylated (N-linked (GlcNAc...) asparagine). Residues 1000–1022 form a helical membrane-spanning segment; that stretch reads QTIPVFAFLGAMVALAFFVVQIS. Residues 1023–1052 lie on the Cytoplasmic side of the membrane; that stretch reads KAKSRPKRRRPRAKRPQLTQQTHPPRTPSV. Basic residues predominate over residues 1025–1037; that stretch reads KSRPKRRRPRAKR. A disordered region spans residues 1025–1052; sequence KSRPKRRRPRAKRPQLTQQTHPPRTPSV.

The protein belongs to the peptidase S8 family. Ca(2+) is required as a cofactor. Post-translationally, the 148 kDa zymogen is processed progressively into two membrane-bound 120 and 106 kDa forms in the endoplasmic reticulum, and late into a secreted 98 kDa form. The propeptide is autocatalytically removed through an intramolecular cleavage after Leu-186. Further cleavage generates 14, 10, and 8 kDa intermediates.

It localises to the endoplasmic reticulum membrane. The protein localises to the golgi apparatus membrane. It carries out the reaction Processes precursors containing basic and hydrophobic/aliphatic residues at P4 and P2, respectively, with a relatively relaxed acceptance of amino acids at P1 and P3.. Inhibited by divalent copper and zinc ions, but not by nickel or cobalt. Inhibited by its prosegment, but not smaller fragments. Inhibited by 4-(2-aminoethyl)benzenesulfonyl fluoride (AEBSF), a serine protease inhibitor. Its function is as follows. Serine protease that cleaves after hydrophobic or small residues, provided that Arg or Lys is in position P4: known substrates include SREBF1/SREBP1, SREBF2/SREBP2, BDNF, GNPTAB, ATF6, ATF6B and FAM20C. Cleaves substrates after Arg-Ser-Val-Leu (SREBP2), Arg-His-Leu-Leu (ATF6), Arg-Gly-Leu-Thr (BDNF) and its own propeptide after Arg-Arg-Leu-Leu. Catalyzes the first step in the proteolytic activation of the sterol regulatory element-binding proteins (SREBPs) SREBF1/SREBP1 and SREBF2/SREBP2. Also mediates the first step in the proteolytic activation of the cyclic AMP-dependent transcription factor ATF-6 (ATF6 and ATF6B). Mediates the protein cleavage of GNPTAB into subunit alpha and beta, thereby participating in biogenesis of lysosomes. Cleaves the propeptide from FAM20C which is required for FAM20C secretion from the Golgi apparatus membrane and for enhancement of FAM20C kinase activity, promoting osteoblast differentiation and biomineralization. Involved in the regulation of M6P-dependent Golgi-to-lysosome trafficking of lysosomal enzymes. It is required for the activation of CREB3L2/BBF2H7, a transcriptional activator of MIA3/TANGO and other genes controlling mega vesicle formation. Therefore, it plays a key role in the regulation of mega vesicle-mediated collagen trafficking. In astrocytes and osteoblasts, upon DNA damage and ER stress, mediates the first step of the regulated intramembrane proteolytic activation of the transcription factor CREB3L1, leading to the inhibition of cell-cycle progression. The protein is Membrane-bound transcription factor site-1 protease of Cricetulus griseus (Chinese hamster).